We begin with the raw amino-acid sequence, 562 residues long: MSEQKLAVNEYLKTDSDYLRGTIQEGLDTQVTGSFSDGDQQLIKFHGFYQQDDRDLRNERKEQKLEPLYSFMLRARVPGGICTPAQWLDVDKISSTLTTSNSIRLTTRQTFQYHGIPKRNLKTLIQGLDKAALDSIAACGDVNRNVMCNPNPVESKLHAQAYAVAKELSDHLLPHTRAYAEIWLDEEKLVGETVEPVYGNTYLPRKFKMAVSVPPDNDVDVYTNDLGFIAIAEDGQLVGFNLVAGGGMGSTHGEVETFPRLADDFGFIKTADVIKFAEAVMTVQRDWGNRVVRKRARLKYTIVDHGFDAFKAEVENRAGVKFAPKRDVVIGDRGDRYGWVEGIDSKWHLTLFIESGRIKDLPGQTLQTGLREIAKIHKGDFRMTSNQNMIIAGVAAEDKAEIEGLARKHGLMGQVLTGTRGHSIACVALPTCPLAMAEAERYFPEFIDHIDALQAKHGISDQSIVVRMTGCPNGCARPFAAEIGLVGKAPGRYNLYLGANFEGTRLNKMHKENIQEAEILAELDTLFGRYATERDAGETFGNFTVRIGVVKAVNDAAKDFHG.

Residues cysteine 426, cysteine 432, cysteine 471, and cysteine 475 each contribute to the [4Fe-4S] cluster site. Cysteine 475 lines the siroheme pocket.

Belongs to the nitrite and sulfite reductase 4Fe-4S domain family. Alpha(8)-beta(8). The alpha component is a flavoprotein, the beta component is a hemoprotein. Siroheme is required as a cofactor. Requires [4Fe-4S] cluster as cofactor.

It catalyses the reaction hydrogen sulfide + 3 NADP(+) + 3 H2O = sulfite + 3 NADPH + 4 H(+). Its pathway is sulfur metabolism; hydrogen sulfide biosynthesis; hydrogen sulfide from sulfite (NADPH route): step 1/1. Functionally, component of the sulfite reductase complex that catalyzes the 6-electron reduction of sulfite to sulfide. This is one of several activities required for the biosynthesis of L-cysteine from sulfate. This chain is Sulfite reductase [NADPH] hemoprotein beta-component, found in Shewanella denitrificans (strain OS217 / ATCC BAA-1090 / DSM 15013).